A 588-amino-acid chain; its full sequence is L-fucose isomerase (588 aa).

Catalysis depends on proton acceptor residues Glu-335 and Asp-359. Positions 335, 359, and 525 each coordinate Mn(2+).

Belongs to the L-fucose isomerase family. Requires Mn(2+) as cofactor.

It is found in the cytoplasm. The enzyme catalyses L-fucose = L-fuculose. It participates in carbohydrate degradation; L-fucose degradation; L-lactaldehyde and glycerone phosphate from L-fucose: step 1/3. Converts the aldose L-fucose into the corresponding ketose L-fuculose. The polypeptide is L-fucose isomerase (Streptococcus pneumoniae (strain JJA)).